The following is a 541-amino-acid chain: Peptidyl-alpha-hydroxyglycine alpha-amidating lyase 1 (541 aa).

An N-terminal signal peptide occupies residues 1–33 (MKSTDSAKCLGSKSLAICCLLLHLLLCIRPAVS). At 34–458 (QTQSPQRYLH…VAVHHPSGKA (425 aa)) the chain is on the extracellular side. An N-linked (GlcNAc...) asparagine glycan is attached at Asn92. NHL repeat units follow at residues 164-205 (GKVQ…FPPR), 215-258 (LGDA…YSRK), and 272-314 (GISY…FLSS). 2 disulfide bridges follow: Cys228/Cys248 and Cys299/Cys310. N-linked (GlcNAc...) asparagine glycosylation is present at Asn315. Residues 374–418 (KQLVSKFGPNNLQFQNPHDVAVTADGNEIYVAELNPMRIHKFVHR) form an NHL 4 repeat. The helical transmembrane segment at 459 to 479 (ILVASLMLLFAGSTFALALIF) threads the bilayer. Residues 480–541 (ARRRKRGCLP…TKTLASAQYA (62 aa)) lie on the Cytoplasmic side of the membrane. Residues 521 to 541 (LDQQASDEEQETKTLASAQYA) form a disordered region.

Belongs to the peptidyl-alpha-hydroxyglycine alpha-amidating lyase family. Zn(2+) serves as cofactor. N-glycosylated. Widely expressed. In mature larvae, it is ubiquitously expressed with a low expression in all cells and a stronger expression in a subset of neurons. Colocalizes with neuropeptide proctolin. In adults, weak expression is observed in most neuronal cell bodies and in scattered large cells throughout the protocerebrum and also in the subesophageal neuromeres (at protein level).

The protein localises to the cell membrane. The catalysed reaction is a [peptide]-C-terminal (2S)-2-hydroxyglycine = a [peptide]-C-terminal amide + glyoxylate. Peptidyl-alpha-hydroxylglycine alpha-amidating lyase that catalyzes an essential reaction in C-terminal alpha-amidation of peptides. Mediates the dismutation of the unstable peptidyl(2-hydroxyglycine) intermediate to glyoxylate and the corresponding desglycine peptide amide. C-terminal amidation of peptides such as neuropeptides is essential for full biological activity. The chain is Peptidyl-alpha-hydroxyglycine alpha-amidating lyase 1 (Pal1) from Drosophila melanogaster (Fruit fly).